Here is a 368-residue protein sequence, read N- to C-terminus: MKINGISYRSLWRPSDDASSIRIFDQTRFPWNVEILELRDVGAVADAITSMQVRGAPLIGAVAAYGLVFALQDDASDEALEKAAAFLVATRPTAINLRWAIERMVARLKAVRPTERVAAGYVEADAICDEDVQVNEAIGRHGLELIREIWERKGKQGQVNLLTHCNAGWIATVDWGTALAPIYMAHDEGIPVHVWVDETRPRNQGSLLTAWELGSHGVPHTVIADNAGGHYMQTGRVDMVIVGTDRVTAQGDVANKIGTYLKALAAHDNNVPFWVALPSSTIDWRVRDGVKDIPIEERSADEVLFMTGLDSNGEAGRVRIAPLNSPAANPAFDVTPARLVTGLITERGRCDASEAGLQSLFPEQTKAH.

Substrate-binding positions include 54–56, Arg-91, and Gln-204; that span reads RGA. Residue Asp-245 is the Proton donor of the active site. 255-256 is a substrate binding site; sequence NK.

It belongs to the eIF-2B alpha/beta/delta subunits family. MtnA subfamily.

It catalyses the reaction 5-(methylsulfanyl)-alpha-D-ribose 1-phosphate = 5-(methylsulfanyl)-D-ribulose 1-phosphate. It participates in amino-acid biosynthesis; L-methionine biosynthesis via salvage pathway; L-methionine from S-methyl-5-thio-alpha-D-ribose 1-phosphate: step 1/6. Functionally, catalyzes the interconversion of methylthioribose-1-phosphate (MTR-1-P) into methylthioribulose-1-phosphate (MTRu-1-P). This chain is Methylthioribose-1-phosphate isomerase, found in Gluconobacter oxydans (strain 621H) (Gluconobacter suboxydans).